The following is a 589-amino-acid chain: F-box only protein 24 (589 aa).

Residues 23 to 69 (PISVQLFPPELVEHIVSFLPVKDLVALGQTCHYFHEVCDAEGVWRRI) enclose the F-box domain. The stretch at 386 to 435 (GRIFMQGNNRYGQLGTGDKMDRGEPTQVHYLQRPIALWCGLNHSLVLSQT) is one RCC1 repeat. The disordered stretch occupies residues 506 to 526 (VGGSPEPSQGAGAPQDPGGTA).

As to quaternary structure, directly interacts with SKP1 and CUL1.

Substrate-recognition component of the SCF (SKP1-CUL1-F-box protein)-type E3 ubiquitin ligase complex. This is F-box only protein 24 (Fbxo24) from Mus musculus (Mouse).